An 88-amino-acid chain; its full sequence is Putative membrane protein insertion efficiency factor (88 aa).

Belongs to the UPF0161 family.

It localises to the cell inner membrane. Could be involved in insertion of integral membrane proteins into the membrane. The sequence is that of Putative membrane protein insertion efficiency factor from Synechococcus sp. (strain CC9311).